The sequence spans 488 residues: Altronate oxidoreductase (488 aa).

V18–A29 contacts NAD(+).

Belongs to the mannitol dehydrogenase family. UxaB subfamily.

It catalyses the reaction D-altronate + NAD(+) = keto-D-tagaturonate + NADH + H(+). The protein operates within carbohydrate metabolism; pentose and glucuronate interconversion. This is Altronate oxidoreductase from Pectobacterium carotovorum subsp. carotovorum (strain PC1).